The sequence spans 231 residues: Uracil-DNA glycosylase (231 aa).

The active-site Proton acceptor is the Asp-74.

Belongs to the uracil-DNA glycosylase (UDG) superfamily. UNG family.

The protein resides in the cytoplasm. The enzyme catalyses Hydrolyzes single-stranded DNA or mismatched double-stranded DNA and polynucleotides, releasing free uracil.. Functionally, excises uracil residues from the DNA which can arise as a result of misincorporation of dUMP residues by DNA polymerase or due to deamination of cytosine. The protein is Uracil-DNA glycosylase of Campylobacter jejuni subsp. doylei (strain ATCC BAA-1458 / RM4099 / 269.97).